A 300-amino-acid polypeptide reads, in one-letter code: Ribosome-inactivating protein 3 (300 aa).

Residue E207 is part of the active site.

Belongs to the ribosome-inactivating protein family. Type 1 RIP subfamily. As to quaternary structure, monomer. Accumulates to high levels in seeds.

The protein resides in the cytoplasm. The catalysed reaction is Endohydrolysis of the N-glycosidic bond at one specific adenosine on the 28S rRNA.. In terms of biological role, possesses features of some constitutive defense agent. The coordinate Opaque-2-controlled synthesis of this protein and the major seed storage proteins (zeins) may provide the germinating seedling with both nutritional benefits and protection against pathogen invasion of the surrounding endosperm. In Zea mays (Maize), this protein is Ribosome-inactivating protein 3 (CRIP3).